The chain runs to 366 residues: Isocitrate dehydrogenase [NAD] subunit alpha, mitochondrial (366 aa).

The N-terminal 27 residues, 1 to 27 (MAGPAWISKVSRLLGAFHNQKQVTRGF), are a transit peptide targeting the mitochondrion. Lysine 77 is subject to N6-succinyllysine. Threonine 101 bears the Phosphothreonine mark. The substrate site is built by arginine 115, arginine 125, and arginine 146. Lysine 223 is subject to N6-acetyllysine. 3 residues coordinate Mg(2+): aspartate 233, aspartate 257, and aspartate 261. Lysine 343 is subject to N6-acetyllysine; alternate. Position 343 is an N6-succinyllysine; alternate (lysine 343). An N6-succinyllysine modification is found at lysine 350.

The protein belongs to the isocitrate and isopropylmalate dehydrogenases family. As to quaternary structure, heterooligomer of subunits alpha (IDH3A), beta (IDH3B), and gamma (IDH3G) in the apparent ratio of 2:1:1. The heterodimer containing one IDH3A and one IDH3B subunit and the heterodimer containing one IDH3A and one IDH3G subunit assemble into a heterotetramer (which contains two subunits of IDH3A, one of IDH3B and one of IDH3G) and further into the heterooctamer. Mg(2+) serves as cofactor. It depends on Mn(2+) as a cofactor.

It localises to the mitochondrion. The catalysed reaction is D-threo-isocitrate + NAD(+) = 2-oxoglutarate + CO2 + NADH. With respect to regulation, the heterotetramer and the heterodimer composed of IDH3A and IDH3G subunits can be allosterically activated by citrate (CIT) or/and ADP, and the two activators can act independently or synergistically. The heterodimer composed of IDH3A and IDH3B subunits cannot be allosterically regulated and the allosteric regulation of the heterotetramer is through the IDH3G subunit and not the IDH3B subunit. The IDH3G subunit contains the allosteric site which consists of a CIT-binding site and an ADP-binding site, and the binding of CIT and ADP causes conformational changes at the allosteric site which are transmitted to the active site in the catalytic subunit (IDH3A) through a cascade of conformational changes at the heterodimer interface, leading to stabilization of the isocitrate-binding at the active site and thus activation of the enzyme. ATP can activate the heterotetramer and the heterodimer composed of IDH3A and IDH3G subunits at low concentrations but inhibits their activities at high concentrations, whereas ATP exhibits only inhibitory effect on the heterodimer composed of IDH3A and IDH3B subunits. Catalytic subunit of the enzyme which catalyzes the decarboxylation of isocitrate (ICT) into alpha-ketoglutarate. The heterodimer composed of the alpha (IDH3A) and beta (IDH3B) subunits and the heterodimer composed of the alpha (IDH3A) and gamma (IDH3G) subunits, have considerable basal activity but the full activity of the heterotetramer (containing two subunits of IDH3A, one of IDH3B and one of IDH3G) requires the assembly and cooperative function of both heterodimers. This is Isocitrate dehydrogenase [NAD] subunit alpha, mitochondrial from Bos taurus (Bovine).